We begin with the raw amino-acid sequence, 86 residues long: U15-lycotoxin-Ls1a (86 aa).

Positions 1–20 (MNSKIFAVLFLLAFLSCVLS) are cleaved as a signal peptide. Residues 21–66 (DQYCPKSSITACKKMNIRNDCCKDDDCTGGSWCCATPCGNFCKYPT) enclose the WAP domain. 5 disulfides stabilise this stretch: C24–C54, C32–C58, C41–C53, C42–C80, and C47–C62.

Belongs to the venom protein 11 family. 01 (wap-1) subfamily. In terms of processing, contains 5 disulfide bonds. In terms of tissue distribution, expressed by the venom gland.

Its subcellular location is the secreted. Its function is as follows. Has antibacterial activity. This Lycosa singoriensis (Wolf spider) protein is U15-lycotoxin-Ls1a.